Reading from the N-terminus, the 257-residue chain is tRNA (guanine-N(1)-)-methyltransferase (257 aa).

Residues Gly113 and 133–138 (IGDYVL) contribute to the S-adenosyl-L-methionine site.

This sequence belongs to the RNA methyltransferase TrmD family. As to quaternary structure, homodimer.

It is found in the cytoplasm. It catalyses the reaction guanosine(37) in tRNA + S-adenosyl-L-methionine = N(1)-methylguanosine(37) in tRNA + S-adenosyl-L-homocysteine + H(+). Specifically methylates guanosine-37 in various tRNAs. This chain is tRNA (guanine-N(1)-)-methyltransferase, found in Cronobacter sakazakii (strain ATCC BAA-894) (Enterobacter sakazakii).